A 447-amino-acid chain; its full sequence is Probable aspartic protease At2g35615 (447 aa).

Positions 1–20 (MATQILLCFFLFFSVTLSSS) are cleaved as a signal peptide. N-linked (GlcNAc...) asparagine glycosylation occurs at N25. The Peptidase A1 domain maps to 85 to 439 (FFMSITIGTP…DLETRTVSFQ (355 aa)). D103 is a catalytic residue. N-linked (GlcNAc...) asparagine glycosylation occurs at N251. D326 is an active-site residue.

This sequence belongs to the peptidase A1 family.

The protein localises to the secreted. This is Probable aspartic protease At2g35615 from Arabidopsis thaliana (Mouse-ear cress).